A 508-amino-acid polypeptide reads, in one-letter code: Flavonoid 3'-monooxygenase CYP75B137 (508 aa).

Residues 2–22 (LTFFFLWISTLLLSSFIVYLL) form a helical membrane-spanning segment. Cys445 contributes to the heme binding site.

Belongs to the cytochrome P450 family. Requires heme as cofactor. Expressed in young cromes.

Its subcellular location is the membrane. The catalysed reaction is a 3'-unsubstituted flavone + reduced [NADPH--hemoprotein reductase] + O2 = a 3'-hydroxyflavone + oxidized [NADPH--hemoprotein reductase] + H2O + H(+). It carries out the reaction (2S)-naringenin + reduced [NADPH--hemoprotein reductase] + O2 = (S)-eriodictyol + oxidized [NADPH--hemoprotein reductase] + H2O + H(+). The enzyme catalyses (2R,3R)-dihydrokaempferol + reduced [NADPH--hemoprotein reductase] + O2 = (2R,3R)-dihydroquercetin + oxidized [NADPH--hemoprotein reductase] + H2O + H(+). It catalyses the reaction kaempferol + reduced [NADPH--hemoprotein reductase] + O2 = quercetin + oxidized [NADPH--hemoprotein reductase] + H2O + H(+). It participates in flavonoid metabolism. In terms of biological role, flavonoid 3'-hydroxylase that catalyzes the 3'-hydroxylation of flavanones, dihydroflavonols and flavonols. Converts narigenin to eriodictyol, dihydrokaempferol to dihydroquercetin and kaempferol to quercetin. This is Flavonoid 3'-monooxygenase CYP75B137 from Crocosmia x crocosmiiflora (Montbretia).